Reading from the N-terminus, the 917-residue chain is Lipoxygenase 6, chloroplastic (917 aa).

A chloroplast-targeting transit peptide spans 1-40 (MFVASPVKTNFNGVSLVKSPAFSALSCRKQHRVPISRQVR). Residues 46-57 (EEKAVDQEDGKK) are compositionally biased toward basic and acidic residues. Positions 46–66 (EEKAVDQEDGKKSTNKPLINS) are disordered. Residues 98–216 (ERFEHQLELF…DNPQARIIFR (119 aa)) enclose the PLAT domain. The 699-residue stretch at 219–917 (PCLPSETPDG…GRGIPNSISI (699 aa)) folds into the Lipoxygenase domain. Positions 575, 580, 767, and 771 each coordinate Fe cation. The segment at 880 to 904 (KDKKLKNRTGAGMPPYELLLPTSPH) is disordered. Residue I917 coordinates Fe cation.

This sequence belongs to the lipoxygenase family. Fe cation is required as a cofactor.

It localises to the plastid. It is found in the chloroplast. The enzyme catalyses (9Z,12Z)-octadecadienoate + O2 = (13S)-hydroperoxy-(9Z,11E)-octadecadienoate. It carries out the reaction (9Z,12Z,15Z)-octadecatrienoate + O2 = (13S)-hydroperoxy-(9Z,11E,15Z)-octadecatrienoate. It functions in the pathway lipid metabolism; oxylipin biosynthesis. Its function is as follows. Plant lipoxygenases may be involved in a number of diverse aspects of plant physiology including growth and development, pest resistance, and senescence or responses to wounding. Catalyzes the hydroperoxidation of lipids containing a cis,cis-1,4-pentadiene structure. 13S-lipoxygenase that can use linolenic acid as substrates. In Arabidopsis thaliana (Mouse-ear cress), this protein is Lipoxygenase 6, chloroplastic.